A 502-amino-acid chain; its full sequence is UDP-N-acetylmuramate--L-alanine ligase (502 aa).

119 to 125 (GSHGKST) contributes to the ATP binding site.

The protein belongs to the MurCDEF family.

It is found in the cytoplasm. It carries out the reaction UDP-N-acetyl-alpha-D-muramate + L-alanine + ATP = UDP-N-acetyl-alpha-D-muramoyl-L-alanine + ADP + phosphate + H(+). It functions in the pathway cell wall biogenesis; peptidoglycan biosynthesis. Cell wall formation. In Frankia casuarinae (strain DSM 45818 / CECT 9043 / HFP020203 / CcI3), this protein is UDP-N-acetylmuramate--L-alanine ligase.